Consider the following 457-residue polypeptide: Cystathionine beta-lyase, chloroplastic (457 aa).

A chloroplast-targeting transit peptide spans 1 to 51; sequence MFSRPFVTPVTIDLQVKSITAGNMWEGLGFYKPANSKSNQMICSKGFRLNC. 6 residues coordinate pyridoxal 5'-phosphate: Tyr120, Arg122, Gly150, Met151, Ser268, and Thr270. Lys271 carries the post-translational modification N6-(pyridoxal phosphate)lysine.

This sequence belongs to the trans-sulfuration enzymes family. In terms of assembly, forms homodimers. May form homotetramers from two homodimers. Pyridoxal 5'-phosphate is required as a cofactor.

The protein localises to the plastid. It localises to the chloroplast. The catalysed reaction is L,L-cystathionine + H2O = L-homocysteine + pyruvate + NH4(+). The enzyme catalyses an S-substituted L-cysteine + H2O = a thiol + pyruvate + NH4(+). Functionally, catalyzes the degradation of cystathionine. This Mimosa pudica (Sensitive plant) protein is Cystathionine beta-lyase, chloroplastic.